Here is a 354-residue protein sequence, read N- to C-terminus: MRRLLFCTLLMTGLTQLCCRTQGSAPQDSTPGGRPGAALEVYQRTEVCRWPCRCPPQRPTCPPGVSLVRDGCGCCKVCAKQPGDTCNEAEICDPHKGLYCDYSGDTPRYETGVCAYLVAVGCEFNRVYYQNGQVFQPHPLFSCLCVSGAIGCTPLFIPKLAGSNCSAAKGRRKTDPPNCGRGTLQQQNSASYKTMSAYRNLPLTWRKKCLVQATKWTPCSRTCGMGISNRVTNDNANCEMRKERRLCYIQPCSRNTSQAVKIPRGETCQPTFQLPKAEKFVFSGCSSTQSYRPTFCGICLDKRCCVPNKSKMITVRFDCPSEGSFKWQMLWVTSCVCQRDCREPGDIFSELRIL.

A signal peptide spans 1 to 23 (MRRLLFCTLLMTGLTQLCCRTQG). One can recognise an IGFBP N-terminal domain in the interval 44–117 (RTEVCRWPCR…RYETGVCAYL (74 aa)). 13 disulfide bridges follow: C48–C72, C52–C74, C54–C75, C61–C78, C86–C100, C92–C114, C209–C238, C219–C223, C247–C252, C268–C305, C285–C319, C296–C335, and C299–C337. A TSP type-1 domain is found at 208 to 253 (KCLVQATKWTPCSRTCGMGISNRVTNDNANCEMRKERRLCYIQPCS). The 75-residue stretch at 268–342 (CQPTFQLPKA…TSCVCQRDCR (75 aa)) folds into the CTCK domain. N308 carries N-linked (GlcNAc...) asparagine glycosylation.

The protein belongs to the CCN family.

It localises to the secreted. The protein localises to the mitochondrion. Plays a role in mitochondrial electron transport and mitochondrial respiration. This Mus musculus (Mouse) protein is Cellular communication network factor 6.